Consider the following 45-residue polypeptide: Large ribosomal subunit protein bL34 (45 aa).

A disordered region spans residues 1–27 (MTKRTLGGTSRKRKRVSGFRVRMRSHT). A compositionally biased stretch (basic residues) spans 10-27 (SRKRKRVSGFRVRMRSHT).

Belongs to the bacterial ribosomal protein bL34 family.

The chain is Large ribosomal subunit protein bL34 from Synechococcus sp. (strain CC9902).